The sequence spans 210 residues: Protein GrpE (210 aa).

The protein belongs to the GrpE family. As to quaternary structure, homodimer.

Its subcellular location is the cytoplasm. Participates actively in the response to hyperosmotic and heat shock by preventing the aggregation of stress-denatured proteins, in association with DnaK and GrpE. It is the nucleotide exchange factor for DnaK and may function as a thermosensor. Unfolded proteins bind initially to DnaJ; upon interaction with the DnaJ-bound protein, DnaK hydrolyzes its bound ATP, resulting in the formation of a stable complex. GrpE releases ADP from DnaK; ATP binding to DnaK triggers the release of the substrate protein, thus completing the reaction cycle. Several rounds of ATP-dependent interactions between DnaJ, DnaK and GrpE are required for fully efficient folding. The polypeptide is Protein GrpE (Rhizobium leguminosarum bv. trifolii (strain WSM2304)).